We begin with the raw amino-acid sequence, 146 residues long: Hemoglobin subunit beta (146 aa).

V1 carries the N-acetylvaline modification. The region spanning 2–146 (DLTAEEKAAV…VANALAHKYH (145 aa)) is the Globin domain. Position 44 is a phosphoserine (S44). The residue at position 59 (K59) is an N6-acetyllysine. Residue H63 participates in heme b binding. K82 is modified (N6-acetyllysine). H92 lines the heme b pocket. S-nitrosocysteine is present on C93. An N6-acetyllysine modification is found at K144.

This sequence belongs to the globin family. Heterotetramer of two alpha chains and two beta chains. As to expression, red blood cells.

Involved in oxygen transport from the lung to the various peripheral tissues. The chain is Hemoglobin subunit beta (HBB) from Rhinoceros unicornis (Greater Indian rhinoceros).